The following is a 202-amino-acid chain: NADH dehydrogenase [ubiquinone] iron-sulfur protein 7, mitochondrial (202 aa).

The transit peptide at 1 to 56 (MLRRTSFNFTGRAMISRGSPEWSHRLDLKKGKKTTMMHKLGTSKPNNALQYAQMTL) directs the protein to the mitochondrion. The [4Fe-4S] cluster site is built by Cys77, Cys78, Cys142, and Cys172.

Belongs to the complex I 20 kDa subunit family. In terms of assembly, complex I is composed of 45 different subunits This is a component of the iron-sulfur (IP) fragment of the enzyme. It depends on [4Fe-4S] cluster as a cofactor.

The protein resides in the mitochondrion. It carries out the reaction a ubiquinone + NADH + 5 H(+)(in) = a ubiquinol + NAD(+) + 4 H(+)(out). In terms of biological role, core subunit of the mitochondrial membrane respiratory chain NADH dehydrogenase (Complex I) that is believed to belong to the minimal assembly required for catalysis. Complex I functions in the transfer of electrons from NADH to the respiratory chain. The immediate electron acceptor for the enzyme is believed to be ubiquinone. The sequence is that of NADH dehydrogenase [ubiquinone] iron-sulfur protein 7, mitochondrial (NDHK) from Trypanosoma brucei brucei.